A 378-amino-acid chain; its full sequence is IDS-type sesquiterpene synthase (378 aa).

Mg(2+)-binding residues include D120 and D124. Positions 120 to 124 (DDYVD) match the DDXXD motif motif.

The protein belongs to the terpene synthase family. It depends on Mg(2+) as a cofactor. In terms of tissue distribution, highly expressed in male epidermal tissue associated with the cuticle of ventral sternites.

The enzyme catalyses (2Z,6E)-farnesyl diphosphate = (Z)-alpha-bisabolene + diphosphate. It functions in the pathway pheromone biosynthesis. Functionally, sesquiterpene alcohol synthase that catalyzes the formation of the pheromone precursor (Z)-alpha-bisabolene from (2Z,6E)-farnesyl diphosphate. The protein is IDS-type sesquiterpene synthase of Nezara viridula (Southern green stink bug).